The primary structure comprises 68 residues: U4-agatoxin-Ao1a (68 aa).

The signal sequence occupies residues 1–25 (MKKSTVIVLSLAAFVLLSVMQFSAA). A propeptide spanning residues 26-36 (EDIKMEVEEQR) is cleaved from the precursor. Intrachain disulfides connect cysteine 39/cysteine 52, cysteine 46/cysteine 57, cysteine 51/cysteine 66, and cysteine 59/cysteine 64.

This sequence belongs to the neurotoxin 33 family. As to expression, expressed by the venom gland.

The protein resides in the secreted. This is U4-agatoxin-Ao1a from Agelena orientalis (Funnel-web spider).